The primary structure comprises 711 residues: Ferric reductase transmembrane component 3 (711 aa).

The signal sequence occupies residues 1–20 (MYWVLLCGSILLCCLSGASA). At 21-166 (SPAKTKMYGK…YANYDIGHTY (146 aa)) the chain is on the extracellular side. 4 N-linked (GlcNAc...) asparagine glycosylation sites follow: Asn85, Asn108, Asn120, and Asn134. A helical transmembrane segment spans residues 167–187 (GGIICAYFVGVMILASILHYL). Topologically, residues 188 to 237 (SYTPFKTALFKQRLVRYVRRYLTIPTIWGKHASSFSYLKIFTGFLPTRSE) are cytoplasmic. A helical membrane pass occupies residues 238–258 (GVIILGYLVLHTVFLAYGYQY). Topologically, residues 259–280 (DPYNLIFDSRREQIARYVADRS) are extracellular. The Ferric oxidoreductase domain occupies 280–414 (SGVLAFAHFP…SGIEWIYAAI (135 aa)). The chain crosses the membrane as a helical span at residues 281-301 (GVLAFAHFPLIALFAGRNNFL). Residues 302–321 (EFISGVKYTSFIMFHKWLGR) lie on the Cytoplasmic side of the membrane. Positions 316 and 330 each coordinate heme. Residues 322 to 341 (MMFLDAVIHGAAYTSYSVFY) form a helical membrane-spanning segment. Over 342-353 (KDWAASKEETYW) the chain is Extracellular. A helical membrane pass occupies residues 354–374 (QFGVAALCIVGVMVFFSLAMF). The Cytoplasmic portion of the chain corresponds to 375–376 (RK). Residues 377–397 (FFYEAFLFLHIVLGALFFYTC) form a helical membrane-spanning segment. His386 contacts heme. Position 398 (Trp398) is a topological domain, extracellular. Residues 399–419 (EHVVELSGIEWIYAAIAIWTI) traverse the membrane as a helical segment. His400 lines the heme pocket. Positions 415–534 (AIWTIDRLIR…EGPYGSSSPV (120 aa)) constitute an FAD-binding FR-type domain. Over 420 to 711 (DRLIRIVRVS…IEYFEEYQSW (292 aa)) the chain is Cytoplasmic. 479–485 (HPFTVLD) provides a ligand contact to FAD. NADP(+) contacts are provided by residues 526–529 (GPYG) and 677–678 (CG).

It belongs to the ferric reductase (FRE) family. The cofactor is FAD. Heme is required as a cofactor.

It is found in the cell membrane. The enzyme catalyses 2 a Fe(II)-siderophore + NADP(+) + H(+) = 2 a Fe(III)-siderophore + NADPH. In terms of biological role, siderophore-iron reductase responsible for reducing extracellular iron prior to import. Catalyzes the reductive uptake of Fe(3+) bound to di- and trihydroxamate siderophores. Fe(3+) is reduced to Fe(2+), which then dissociates from the siderophore and can be imported by the high-affinity Fe(2+) transport complex in the plasma membrane. The protein is Ferric reductase transmembrane component 3 (FRE3) of Saccharomyces cerevisiae (strain ATCC 204508 / S288c) (Baker's yeast).